Reading from the N-terminus, the 207-residue chain is Ras-related protein Rab-7a (207 aa).

Thr-2 carries the post-translational modification N-acetylthreonine. GTP-binding residues include Ser-17, Gly-18, Val-19, Gly-20, Lys-21, Thr-22, Ser-23, Ser-34, Asn-35, Tyr-37, and Thr-40. Thr-22 serves as a coordination point for Mg(2+). The short motif at Tyr-28–Ile-41 is the Switch 1 element. Residues Thr-40 and Asp-63 each contribute to the Mg(2+) site. Gly-66 contributes to the GTP binding site. The Switch 2 signature appears at Gln-67–Asp-82. Position 72 is a phosphoserine (Ser-72). 5 residues coordinate GTP: Asn-125, Lys-126, Asp-128, Ala-156, and Lys-157. Residues Lys-191 and Lys-194 each participate in a glycyl lysine isopeptide (Lys-Gly) (interchain with G-Cter in ubiquitin) cross-link. 2 S-geranylgeranyl cysteine lipidation sites follow: Cys-205 and Cys-207. Position 207 is a cysteine methyl ester (Cys-207).

It belongs to the small GTPase superfamily. Rab family. In terms of assembly, interacts with NTRK1/TRKA. Interacts with RILP. Interacts with PSMA7. Interacts with RNF115. Interacts with FYCO1. Interacts with the PIK3C3/VPS34-PIK3R4 complex. The GTP-bound form interacts with OSBPL1A. The GTP-bound form interacts with RAC1. Interacts with CLN3. Interacts with CHM, the substrate-binding subunit of the Rab geranylgeranyltransferase complex. Interacts with C9orf72. Does not interact with HPS4 and the BLOC-3 complex (heterodimer of HPS1 and HPS4). Interacts with CLN5. Interacts with PLEKHM1 (via N- and C-terminus). Interacts with PRPH; the interaction is direct. Interacts with VPS13A. The GDP-bound form interacts with RIMOC1. Interacts with the MON1A-CCZ1B complex and this interaction is enhanced in the presence of RIMOC1. Interacts with VPS39 and VPS41. Forms a ternary complex with LAMP2 and RUFY4; the interaction with LAMP2 is mediated by RUFY4 (via RUN and coiled coil domains). Requires Mg(2+) as cofactor. Post-translationally, deubiquitination at Lys-191 and Lys-194 by USP32. In terms of processing, phosphorylated at Ser-72 by LRRK1; phosphorylation is dependent on protein kinase C (PKC) activation of LRRK1. Prenylated. Prenylation is required for association with cellular membranes.

It is found in the cytoplasmic vesicle. The protein localises to the phagosome membrane. Its subcellular location is the late endosome membrane. The protein resides in the lysosome membrane. It localises to the melanosome membrane. It is found in the autophagosome membrane. The protein localises to the lipid droplet. Its subcellular location is the endosome membrane. The protein resides in the mitochondrion membrane. The catalysed reaction is GTP + H2O = GDP + phosphate + H(+). Regulated by guanine nucleotide exchange factors (GEFs) which promote the exchange of bound GDP for free GTP. Regulated by GTPase activating proteins (GAPs) which increase the GTP hydrolysis activity. Inhibited by GDP dissociation inhibitors (GDIs). Functionally, the small GTPases Rab are key regulators of intracellular membrane trafficking, from the formation of transport vesicles to their fusion with membranes. Rabs cycle between an inactive GDP-bound form and an active GTP-bound form that is able to recruit to membranes different sets of downstream effectors directly responsible for vesicle formation, movement, tethering and fusion. In its active state, RAB7A binds to a variety of effector proteins playing a key role in the regulation of endo-lysosomal trafficking. Governs early-to-late endosomal maturation, microtubule minus-end as well as plus-end directed endosomal migration and positioning, and endosome-lysosome transport through different protein-protein interaction cascades. Also plays a central role in growth-factor-mediated cell signaling, nutrient-transporter-mediated nutrient uptake, neurotrophin transport in the axons of neurons and lipid metabolism. Also involved in regulation of some specialized endosomal membrane trafficking, such as maturation of melanosomes, pathogen-induced phagosomes (or vacuoles) and autophagosomes. Plays a role in the maturation and acidification of phagosomes that engulf pathogens, such as S.aureus and Mycobacteria. Plays a role in the fusion of phagosomes with lysosomes. In concert with RAC1, plays a role in regulating the formation of RBs (ruffled borders) in osteoclasts. Controls the endosomal trafficking and neurite outgrowth signaling of NTRK1/TRKA. Regulates the endocytic trafficking of the EGF-EGFR complex by regulating its lysosomal degradation. Involved in the ADRB2-stimulated lipolysis through lipophagy, a cytosolic lipase-independent autophagic pathway. Required for the exosomal release of SDCBP, CD63 and syndecan. Required for vesicular trafficking and cell surface expression of ACE2. May play a role in PRPH neuronal intermediate filament assembly. In Bos taurus (Bovine), this protein is Ras-related protein Rab-7a (RAB7A).